Here is a 152-residue protein sequence, read N- to C-terminus: Small ribosomal subunit protein bS6 (152 aa).

Residues 96–152 (HEEGPSAMLQKRDRDDRGPREGGDRGPRREFGDRPPRRDGDFQRGPRPDRAPREDRA) are disordered.

It belongs to the bacterial ribosomal protein bS6 family.

Its function is as follows. Binds together with bS18 to 16S ribosomal RNA. The chain is Small ribosomal subunit protein bS6 from Rhizobium etli (strain ATCC 51251 / DSM 11541 / JCM 21823 / NBRC 15573 / CFN 42).